A 343-amino-acid chain; its full sequence is Inositol 2-dehydrogenase 1 (343 aa).

It belongs to the Gfo/Idh/MocA family. In terms of assembly, homotetramer.

It carries out the reaction myo-inositol + NAD(+) = scyllo-inosose + NADH + H(+). Functionally, involved in the oxidation of myo-inositol (MI) to 2-keto-myo-inositol (2KMI or 2-inosose). This chain is Inositol 2-dehydrogenase 1, found in Mycolicibacterium vanbaalenii (strain DSM 7251 / JCM 13017 / BCRC 16820 / KCTC 9966 / NRRL B-24157 / PYR-1) (Mycobacterium vanbaalenii).